Consider the following 527-residue polypeptide: uncharacterized protein (527 aa).

4 disordered regions span residues 1-49, 99-307, 319-353, and 382-419; these read MSSF…IKDE, DFNF…ATTT, TEIN…EDEN, and YINN…QQQE. Residues 8–17 show a composition bias toward acidic residues; it reads YDDESEEEDN. 2 stretches are compositionally biased toward low complexity: residues 18–44 and 99–115; these read NNNN…NSNN and DFNF…NSNN. A compositionally biased stretch (basic and acidic residues) spans 141–150; sequence NEFRNPDLKN. Low complexity-rich tracts occupy residues 167-178 and 186-222; these read SSQNTTTTQQSS and NNNN…NSNN. The segment covering 229-248 has biased composition (basic and acidic residues); sequence DDKSKKINENENTVNKKDNI. Basic residues predominate over residues 283 to 296; that stretch reads LRKKLLKNQPKTKK. Low complexity-rich tracts occupy residues 297-307 and 319-330; these read STTTTTTATTT and TEINNNNSNSNN. A compositionally biased stretch (acidic residues) spans 386–410; it reads DDGDDDDDDDENENENDSQPEEEYE.

This is an uncharacterized protein from Dictyostelium discoideum (Social amoeba).